A 165-amino-acid chain; its full sequence is Phosphopantetheine adenylyltransferase (165 aa).

Threonine 11 lines the substrate pocket. ATP-binding positions include 11-12 (TF) and histidine 19. Substrate contacts are provided by lysine 43, threonine 79, and arginine 93. ATP-binding positions include glutamate 104 and 128–134 (LEPLNST).

The protein belongs to the bacterial CoaD family. In terms of assembly, homohexamer. The cofactor is Mg(2+).

It localises to the cytoplasm. It carries out the reaction (R)-4'-phosphopantetheine + ATP + H(+) = 3'-dephospho-CoA + diphosphate. It participates in cofactor biosynthesis; coenzyme A biosynthesis; CoA from (R)-pantothenate: step 4/5. Reversibly transfers an adenylyl group from ATP to 4'-phosphopantetheine, yielding dephospho-CoA (dPCoA) and pyrophosphate. The sequence is that of Phosphopantetheine adenylyltransferase from Lactococcus lactis subsp. lactis (strain IL1403) (Streptococcus lactis).